The following is a 175-amino-acid chain: Ribosome maturation factor RimM (175 aa).

The PRC barrel domain occupies 98–175; sequence EGEYYWYQLE…EMRVDWDADF (78 aa).

The protein belongs to the RimM family. Binds ribosomal protein uS19.

It localises to the cytoplasm. Its function is as follows. An accessory protein needed during the final step in the assembly of 30S ribosomal subunit, possibly for assembly of the head region. Essential for efficient processing of 16S rRNA. May be needed both before and after RbfA during the maturation of 16S rRNA. It has affinity for free ribosomal 30S subunits but not for 70S ribosomes. This is Ribosome maturation factor RimM from Pseudomonas paraeruginosa (strain DSM 24068 / PA7) (Pseudomonas aeruginosa (strain PA7)).